Reading from the N-terminus, the 759-residue chain is Protein zyg-11 homolog A (759 aa).

3 LRR repeats span residues 204-227 (LPRL…LTCK), 235-260 (MHYL…CLLH), and 490-513 (VTSI…FMAV).

Belongs to the zyg-11 family.

Functionally, probably acts as a target recruitment subunit in an E3 ubiquitin ligase complex ZYGA-CUL2-elongin BC. This is Protein zyg-11 homolog A (ZYG11A) from Homo sapiens (Human).